The following is an 815-amino-acid chain: Kinesin heavy chain (815 aa).

Residues 11 to 329 (GVQVFCRIRP…LLFGARAKTI (319 aa)) enclose the Kinesin motor domain. Position 88–95 (88–95 (GQTSSGKT)) interacts with ATP. Coiled-coil stretches lie at residues 335–374 (INEELTAEEWKRRYEKEKEKNTRLAALLQAAALELSRWRA), 422–554 (PITD…LDEC), and 695–785 (PAQK…RMNA). Residues 788 to 815 (IVKPIRPGQVYTSPSAGMSQGAPNGSNA) form a disordered region. Positions 797–815 (VYTSPSAGMSQGAPNGSNA) are enriched in polar residues.

Belongs to the TRAFAC class myosin-kinesin ATPase superfamily. Kinesin family. Kinesin subfamily. In terms of assembly, oligomer composed of two heavy chains and two light chains.

The protein localises to the cytoplasm. Its subcellular location is the cytoskeleton. Functionally, microtubule-dependent motor protein required for organelle transport. Plays a role in endosome transport. Required for the transport of mitochondria along the axon of motor neurons. Involved in the nuclear migration of hyp7 hypodermal precursor cells. Required for the formation of dendritic branches of PVD sensory neurons. In non-ciliated neurons such as the PVD and PHC neurons, required for the organization of minus-end out microtubules in dendrites. Also required for the minus-end out orientation of microtubules in dendrites of AQR gas-sensing neurons. Involved in the localization of unc-33 to neurites. Positively regulates cilium position and dendrite morphogenesis in the postembryonic AQR and PQR gas-sensing neurons. Plays a more prominent role in regulating dendrite morphogenesis in AQR than in PQR neurons. Plays a role in regulating the localization of grdn-1 to the distal dendrites of AQR sensory neurons. This is Kinesin heavy chain from Caenorhabditis elegans.